Here is a 51-residue protein sequence, read N- to C-terminus: Small ribosomal subunit protein eS31 (51 aa).

C22, C25, C40, and C43 together coordinate Zn(2+). A C4-type zinc finger spans residues 22–43; it reads CPRCGPGVFMADHGDRWACGRC.

The protein belongs to the eukaryotic ribosomal protein eS31 family. In terms of assembly, part of the 30S ribosomal subunit. Zn(2+) is required as a cofactor.

The sequence is that of Small ribosomal subunit protein eS31 from Pyrococcus abyssi (strain GE5 / Orsay).